The sequence spans 124 residues: Large ribosomal subunit protein bL12 (124 aa).

Belongs to the bacterial ribosomal protein bL12 family. Homodimer. Part of the ribosomal stalk of the 50S ribosomal subunit. Forms a multimeric L10(L12)X complex, where L10 forms an elongated spine to which 2 to 4 L12 dimers bind in a sequential fashion. Binds GTP-bound translation factors.

In terms of biological role, forms part of the ribosomal stalk which helps the ribosome interact with GTP-bound translation factors. Is thus essential for accurate translation. The sequence is that of Large ribosomal subunit protein bL12 from Vesicomyosocius okutanii subsp. Calyptogena okutanii (strain HA).